Here is a 327-residue protein sequence, read N- to C-terminus: Annexin A8 (327 aa).

Annexin repeat units lie at residues 21 to 92 (FNPV…ALMY), 93 to 164 (PPYR…CLLQ), 177 to 249 (GLAL…TIVK), and 253 to 324 (NLHC…SLVG). Ca(2+)-binding residues include Met266, Gly268, Gly270, and Asp310.

The protein belongs to the annexin family.

Functionally, this protein is an anticoagulant protein that acts as an indirect inhibitor of the thromboplastin-specific complex, which is involved in the blood coagulation cascade. The chain is Annexin A8 (ANXA8) from Oryctolagus cuniculus (Rabbit).